Here is a 505-residue protein sequence, read N- to C-terminus: Glycerol kinase (505 aa).

ADP is bound at residue Thr-12. Residues Thr-12, Thr-13, and Ser-14 each contribute to the ATP site. Thr-12 is a sn-glycerol 3-phosphate binding site. Arg-16 lines the ADP pocket. Sn-glycerol 3-phosphate is bound by residues Arg-82, Glu-83, Tyr-134, and Asp-249. Glycerol contacts are provided by Arg-82, Glu-83, Tyr-134, Asp-249, and Gln-250. Residues Thr-271 and Gly-315 each contribute to the ADP site. Residues Thr-271, Gly-315, Gln-319, and Gly-416 each coordinate ATP. Residues Gly-416 and Asn-420 each contribute to the ADP site.

Belongs to the FGGY kinase family.

The enzyme catalyses glycerol + ATP = sn-glycerol 3-phosphate + ADP + H(+). It functions in the pathway polyol metabolism; glycerol degradation via glycerol kinase pathway; sn-glycerol 3-phosphate from glycerol: step 1/1. Inhibited by fructose 1,6-bisphosphate (FBP). Functionally, key enzyme in the regulation of glycerol uptake and metabolism. Catalyzes the phosphorylation of glycerol to yield sn-glycerol 3-phosphate. The polypeptide is Glycerol kinase (Mycolicibacterium vanbaalenii (strain DSM 7251 / JCM 13017 / BCRC 16820 / KCTC 9966 / NRRL B-24157 / PYR-1) (Mycobacterium vanbaalenii)).